We begin with the raw amino-acid sequence, 373 residues long: CCA-adding enzyme (373 aa).

The ATP site is built by Gly8 and Arg11. Residues Gly8 and Arg11 each coordinate CTP. Mg(2+) is bound by residues Asp21 and Asp23. ATP is bound by residues Arg91, Arg137, and Arg140. Residues Arg91, Arg137, and Arg140 each coordinate CTP.

The protein belongs to the tRNA nucleotidyltransferase/poly(A) polymerase family. Bacterial CCA-adding enzyme type 2 subfamily. It depends on Mg(2+) as a cofactor.

It carries out the reaction a tRNA precursor + 2 CTP + ATP = a tRNA with a 3' CCA end + 3 diphosphate. The enzyme catalyses a tRNA with a 3' CCA end + 2 CTP + ATP = a tRNA with a 3' CCACCA end + 3 diphosphate. Catalyzes the addition and repair of the essential 3'-terminal CCA sequence in tRNAs without using a nucleic acid template. Adds these three nucleotides in the order of C, C, and A to the tRNA nucleotide-73, using CTP and ATP as substrates and producing inorganic pyrophosphate. tRNA 3'-terminal CCA addition is required both for tRNA processing and repair. Also involved in tRNA surveillance by mediating tandem CCA addition to generate a CCACCA at the 3' terminus of unstable tRNAs. While stable tRNAs receive only 3'-terminal CCA, unstable tRNAs are marked with CCACCA and rapidly degraded. In Marinobacter nauticus (strain ATCC 700491 / DSM 11845 / VT8) (Marinobacter aquaeolei), this protein is CCA-adding enzyme.